A 347-amino-acid polypeptide reads, in one-letter code: Protein-glutamate methylesterase/protein-glutamine glutaminase (347 aa).

Residues 6 to 123 (RVLVVDDSPT…HRPFGDLAEK (118 aa)) enclose the Response regulatory domain. Aspartate 57 bears the 4-aspartylphosphate mark. In terms of domain architecture, CheB-type methylesterase spans 150–342 (FRVGRKIVAI…EEILKLTAAR (193 aa)). Active-site residues include serine 162, histidine 188, and aspartate 284.

It belongs to the CheB family. Post-translationally, phosphorylated by CheA. Phosphorylation of the N-terminal regulatory domain activates the methylesterase activity.

It is found in the cytoplasm. It carries out the reaction [protein]-L-glutamate 5-O-methyl ester + H2O = L-glutamyl-[protein] + methanol + H(+). It catalyses the reaction L-glutaminyl-[protein] + H2O = L-glutamyl-[protein] + NH4(+). Functionally, involved in chemotaxis. Part of a chemotaxis signal transduction system that modulates chemotaxis in response to various stimuli. Catalyzes the demethylation of specific methylglutamate residues introduced into the chemoreceptors (methyl-accepting chemotaxis proteins or MCP) by CheR. Also mediates the irreversible deamidation of specific glutamine residues to glutamic acid. This is Protein-glutamate methylesterase/protein-glutamine glutaminase from Rhizobium etli (strain ATCC 51251 / DSM 11541 / JCM 21823 / NBRC 15573 / CFN 42).